Consider the following 473-residue polypeptide: Lactate utilization protein B (473 aa).

4Fe-4S ferredoxin-type domains lie at 303 to 333 (GTAF…GHSY) and 352 to 381 (YDDY…LHEL). 7 residues coordinate [4Fe-4S] cluster: cysteine 312, cysteine 315, cysteine 318, cysteine 322, cysteine 365, cysteine 368, and cysteine 372.

It belongs to the LutB/YkgF family.

In terms of biological role, is involved in L-lactate degradation and allows cells to grow with lactate as the sole carbon source. Has probably a role as an electron transporter during oxidation of L-lactate. This chain is Lactate utilization protein B, found in Bacillus pumilus (strain SAFR-032).